Consider the following 397-residue polypeptide: DNA excision repair protein ERCC-8 (397 aa).

WD repeat units lie at residues 41–81, 97–137, 184–224, 243–282, and 332–371; these read IHGS…RQPH, VHKY…AADV, GHRQ…GCLL, AHNG…NTLV, and GHYK…PVPD. Residues serine 391, serine 392, and serine 393 each carry the phosphoserine modification.

Part of the CSA complex (also named DCX(ERCC8) complex), a DCX E3 ubiquitin-protein ligase complex containing ERCC8, RBX1, DDB1 and CUL4A; the CSA complex interacts with RNA polymerase II; upon UV irradiation it interacts with the COP9 signalosome and preferentially with the hyperphosphorylated form of RNA polymerase II. Interacts with ERCC6/CSB (via CIM motif); promoting recruitment to lesion-stalled RNA polymerase II (Pol II). Interacts with KIAA1530/UVSSA. Interacts with a subunit of RNA polymerase II TFIIH.

It localises to the nucleus. It is found in the chromosome. The protein resides in the nucleus matrix. It functions in the pathway protein modification; protein ubiquitination. Substrate-recognition component of the CSA complex, a DCX (DDB1-CUL4-X-box) E3 ubiquitin-protein ligase complex, involved in transcription-coupled nucleotide excision repair (TC-NER), a process during which RNA polymerase II-blocking lesions are rapidly removed from the transcribed strand of active genes. Following recruitment to lesion-stalled RNA polymerase II (Pol II), the CSA complex mediates ubiquitination of Pol II subunit POLR2A/RPB1 at 'Lys-1268', a critical TC-NER checkpoint, governing RNA Pol II stability and initiating DNA damage excision by TFIIH recruitment. The CSA complex also promotes the ubiquitination and subsequent proteasomal degradation of ERCC6/CSB in a UV-dependent manner; ERCC6 degradation is essential for the recovery of RNA synthesis after transcription-coupled repair. Also plays a role in DNA double-strand breaks (DSSBs) repair by non-homologous end joining (NHEJ). This Mus musculus (Mouse) protein is DNA excision repair protein ERCC-8.